The chain runs to 264 residues: MICOS complex subunit MIC27 (264 aa).

A mitochondrion-targeting transit peptide spans 1 to 27 (MAALRMGKLTTMPTGLIYASISVHVAK). At 28–110 (EEESKKQLVK…YVYLKNPPRD (83 aa)) the chain is on the mitochondrial intermembrane side. Residues 111 to 129 (FLPKIGVITVSGLAGFISA) traverse the membrane as a helical segment. Over 130–137 (RKGSRFKR) the chain is Mitochondrial matrix. Residues 138-155 (IAYPLGLATLGATVCYPV) traverse the membrane as a helical segment. The Mitochondrial intermembrane segment spans residues 156–264 (QSVIIAKVAG…EDIDMYSTRS (109 aa)). Residues 189 to 198 (KLPEHKEKTK) are compositionally biased toward basic and acidic residues. The disordered stretch occupies residues 189-264 (KLPEHKEKTK…EDIDMYSTRS (76 aa)). Over residues 223–238 (AELSSETKTKSTSGAT) the composition is skewed to low complexity. Residues 245–256 (KLMDHGQSHPED) are compositionally biased toward basic and acidic residues.

The protein belongs to the apolipoprotein O/MICOS complex subunit Mic27 family. In terms of assembly, component of the mitochondrial contact site and cristae organizing system (MICOS) complex, composed of at least MICOS10/MIC10, CHCHD3/MIC19, CHCHD6/MIC25, APOOL/MIC27, IMMT/MIC60, APOO/MIC23/MIC26 and QIL1/MIC13. This complex was also known under the names MINOS or MitOS complex. The MICOS complex associates with mitochondrial outer membrane proteins SAMM50, MTX1 and MTX2 (together described as components of the mitochondrial outer membrane sorting assembly machinery (SAM) complex) and DNAJC11, mitochondrial inner membrane protein TMEM11 and with HSPA9. The MICOS and SAM complexes together with DNAJC11 are part of a large protein complex spanning both membranes termed the mitochondrial intermembrane space bridging (MIB) complex. Interacts with MICOS10/MIC10, IMMT/MIC60 and APOO/MIC23/MIC26.

The protein resides in the mitochondrion inner membrane. It localises to the mitochondrion. Functionally, component of the MICOS complex, a large protein complex of the mitochondrial inner membrane that plays crucial roles in the maintenance of crista junctions, inner membrane architecture, and formation of contact sites to the outer membrane. Specifically binds to cardiolipin (in vitro) but not to the precursor lipid phosphatidylglycerol. Plays a crucial role in crista junction formation and mitochondrial function. The chain is MICOS complex subunit MIC27 (APOL) from Bos taurus (Bovine).